The chain runs to 152 residues: Ubiquitin-conjugating enzyme E2 2 (152 aa).

In terms of domain architecture, UBC core spans 4 to 150; it reads PARKRLMRDF…VREVVEQSWT (147 aa). The active-site Glycyl thioester intermediate is the Cys88.

This sequence belongs to the ubiquitin-conjugating enzyme family.

It catalyses the reaction S-ubiquitinyl-[E1 ubiquitin-activating enzyme]-L-cysteine + [E2 ubiquitin-conjugating enzyme]-L-cysteine = [E1 ubiquitin-activating enzyme]-L-cysteine + S-ubiquitinyl-[E2 ubiquitin-conjugating enzyme]-L-cysteine.. It functions in the pathway protein modification; protein ubiquitination. Its function is as follows. Catalyzes the covalent attachment of ubiquitin to other proteins. This is Ubiquitin-conjugating enzyme E2 2 (UBC2) from Triticum aestivum (Wheat).